Here is a 398-residue protein sequence, read N- to C-terminus: MISYSLPNERPNDFSRVIPVVKDIIESVKTKGDNALYELTEKLDKVKIDNIKAREEELKTQASKLDPKVKQAIDTAYEQLKAFHEMLVPPNIGGGYQGISFGVIWRSIEKIGIYVPSGKYSYPSTLLMAGIPAKVAKVKEIYVASPPTQEGTVNPALAYVAIKLGVNEVYKIGGAQAIAALAFGTESVKKVYKIVGPGNVYVQAAKYLVSSVVGIDGIEGPTELVIIADETAKAEYVALDMKAQAEHGPDTYIVLLSNDDELIRRVEEKIKNDKKIYYIIKTKNLDEAIEIANKIAPEHLSLYVKDAYTLMDKIVNAGAISLGNTPPAIIDYVAGPNHILPTNGWAKIRGGITVYDFIKPTMYANVRDINKQLLEASISLANYEGFIIHGKSIGARYE.

The NAD(+) site is built by Y114, Q176, and N199. T222, Q244, and H247 together coordinate substrate. 2 residues coordinate Zn(2+): Q244 and H247. Catalysis depends on proton acceptor residues E298 and H299. Substrate-binding residues include H299, D331, E384, and H389. D331 contributes to the Zn(2+) binding site. Residue H389 coordinates Zn(2+).

Belongs to the histidinol dehydrogenase family. It depends on Zn(2+) as a cofactor.

The catalysed reaction is L-histidinol + 2 NAD(+) + H2O = L-histidine + 2 NADH + 3 H(+). It participates in amino-acid biosynthesis; L-histidine biosynthesis; L-histidine from 5-phospho-alpha-D-ribose 1-diphosphate: step 9/9. Its function is as follows. Catalyzes the sequential NAD-dependent oxidations of L-histidinol to L-histidinaldehyde and then to L-histidine. The chain is Histidinol dehydrogenase (hisD) from Saccharolobus solfataricus (strain ATCC 35092 / DSM 1617 / JCM 11322 / P2) (Sulfolobus solfataricus).